The sequence spans 667 residues: Acyl-coenzyme A oxidase acox-3 (667 aa).

Residues 138-141 (FCLT), 146-147 (GS), glycine 178, arginine 313, 334-337 (QQYR), and glycine 410 each bind FAD. Residue glutamate 433 is the Proton acceptor of the active site. Position 435 (glutamate 435) interacts with FAD. The Microbody targeting signal signature appears at 665–667 (SKL).

The protein belongs to the acyl-CoA oxidase family. Homodimer. FAD is required as a cofactor. As to expression, expressed in intestine.

It localises to the peroxisome. It catalyses the reaction IC-asc-C7-CoA + O2 = IC-asc-DeltaC7-CoA + H2O2. The enzyme catalyses IC-asc-C9-CoA + O2 = IC-asc-DeltaC9-CoA + H2O2. It carries out the reaction asc-C13-CoA + O2 = asc-DeltaC13-CoA + H2O2. It functions in the pathway lipid metabolism; peroxisomal fatty acid beta-oxidation. Its activity is regulated as follows. In contrast to other acyl-coenzyme A oxidases which bind to and are activated by ATP, does not bind ATP. Its function is as follows. Involved in the first step of peroxisomal beta-oxidation by catalyzing the desaturation of fatty acid-derived side chains of ascaroside pheromones, which regulates development and behavior. Specifically, shortens indol-3-carbonyl(IC)-ascarosides with 7-carbon (IC-asc-C7) or 9-carbon (IC-asc-C9) side chains and contributes to the shortening of ascarosides with 13-carbon (asc-C13) and 15-carbon (asc-C15) side chains. The polypeptide is Acyl-coenzyme A oxidase acox-3 (Caenorhabditis elegans).